Here is a 138-residue protein sequence, read N- to C-terminus: Ribulose bisphosphate carboxylase small subunit (138 aa).

This sequence belongs to the RuBisCO small chain family. As to quaternary structure, heterohexadecamer of 8 large and 8 small subunits.

The protein localises to the plastid. It is found in the chloroplast. RuBisCO catalyzes two reactions: the carboxylation of D-ribulose 1,5-bisphosphate, the primary event in carbon dioxide fixation, as well as the oxidative fragmentation of the pentose substrate in the photorespiration process. Both reactions occur simultaneously and in competition at the same active site. Although the small subunit is not catalytic it is essential for maximal activity. In Pyropia haitanensis (Red seaweed), this protein is Ribulose bisphosphate carboxylase small subunit.